Reading from the N-terminus, the 320-residue chain is GTPase Era (320 aa).

Residues 25 to 193 (HCGFIAIVGR…RKHVRNHLPK (169 aa)) form the Era-type G domain. A G1 region spans residues 33-40 (GRPNVGKS). 33-40 (GRPNVGKS) is a GTP binding site. The tract at residues 59 to 63 (QTTRH) is G2. Positions 80–83 (DTPG) are G3. GTP contacts are provided by residues 80–84 (DTPGL) and 142–145 (NKVD). Positions 142–145 (NKVD) are G4. Residues 172 to 174 (ISA) form a G5 region. Positions 216–302 (VREKLMRFTG…YLETWVKVKS (87 aa)) constitute a KH type-2 domain.

It belongs to the TRAFAC class TrmE-Era-EngA-EngB-Septin-like GTPase superfamily. Era GTPase family. As to quaternary structure, monomer.

Its subcellular location is the cytoplasm. The protein resides in the cell inner membrane. Functionally, an essential GTPase that binds both GDP and GTP, with rapid nucleotide exchange. Plays a role in 16S rRNA processing and 30S ribosomal subunit biogenesis and possibly also in cell cycle regulation and energy metabolism. In Vibrio parahaemolyticus serotype O3:K6 (strain RIMD 2210633), this protein is GTPase Era.